Here is an 87-residue protein sequence, read N- to C-terminus: Putative membrane protein insertion efficiency factor (87 aa).

It belongs to the UPF0161 family.

The protein resides in the cell membrane. In terms of biological role, could be involved in insertion of integral membrane proteins into the membrane. This is Putative membrane protein insertion efficiency factor from Streptococcus pyogenes serotype M12 (strain MGAS2096).